The following is a 200-amino-acid chain: Alpha/beta-tubulin-N-acetyltransferase 9 (200 aa).

Residues 34-181 enclose the N-acetyltransferase domain; sequence ETLRELTASE…HEVTLERPIT (148 aa).

Belongs to the acetyltransferase family. GNAT subfamily. Interacts with microtubules as well as alpha/beta-tubulin heterodimers.

The protein resides in the nucleus. Its subcellular location is the cytoplasm. It localises to the cytoskeleton. The protein localises to the spindle. It is found in the spindle pole. The enzyme catalyses N-terminal L-methionyl-[tubulin] + acetyl-CoA = N-terminal N(alpha)-acetyl-L-methionyl-[tubulin] + CoA + H(+). N-acetyltransferase that mediates the acetylation of the N-terminal residues of alpha- and beta-tubulin. Required for microtubule stability and inhibition of JNK signaling to promote cell survival during development, possibly acting independently of its N-acetyltransferase activity. Necessary for the stabilization of spindle microtubules and for mitosis progression. Regulates microtubule stability by inhibiting Spastin-mediated depolymerization and promoting Eb1-mediated polymerization. In Drosophila melanogaster (Fruit fly), this protein is Alpha/beta-tubulin-N-acetyltransferase 9.